The chain runs to 466 residues: Glutamate-1-semialdehyde 2,1-aminomutase (466 aa).

The residue at position 292 (K292) is an N6-(pyridoxal phosphate)lysine.

This sequence belongs to the class-III pyridoxal-phosphate-dependent aminotransferase family. HemL subfamily. As to quaternary structure, homodimer. It depends on pyridoxal 5'-phosphate as a cofactor.

It localises to the cytoplasm. It carries out the reaction (S)-4-amino-5-oxopentanoate = 5-aminolevulinate. The protein operates within porphyrin-containing compound metabolism; protoporphyrin-IX biosynthesis; 5-aminolevulinate from L-glutamyl-tRNA(Glu): step 2/2. The polypeptide is Glutamate-1-semialdehyde 2,1-aminomutase (Tropheryma whipplei (strain TW08/27) (Whipple's bacillus)).